Here is a 258-residue protein sequence, read N- to C-terminus: Imidazole glycerol phosphate synthase subunit HisF (258 aa).

Active-site residues include Asp-11 and Asp-130.

This sequence belongs to the HisA/HisF family. Heterodimer of HisH and HisF.

It is found in the cytoplasm. The catalysed reaction is 5-[(5-phospho-1-deoxy-D-ribulos-1-ylimino)methylamino]-1-(5-phospho-beta-D-ribosyl)imidazole-4-carboxamide + L-glutamine = D-erythro-1-(imidazol-4-yl)glycerol 3-phosphate + 5-amino-1-(5-phospho-beta-D-ribosyl)imidazole-4-carboxamide + L-glutamate + H(+). Its pathway is amino-acid biosynthesis; L-histidine biosynthesis; L-histidine from 5-phospho-alpha-D-ribose 1-diphosphate: step 5/9. Functionally, IGPS catalyzes the conversion of PRFAR and glutamine to IGP, AICAR and glutamate. The HisF subunit catalyzes the cyclization activity that produces IGP and AICAR from PRFAR using the ammonia provided by the HisH subunit. This Xanthomonas campestris pv. campestris (strain 8004) protein is Imidazole glycerol phosphate synthase subunit HisF.